Reading from the N-terminus, the 360-residue chain is uncharacterized protein (360 aa).

One can recognise a 4Fe-4S ferredoxin-type domain in the interval 11–40; it reads KEEVWDTNRCSGCGACVAVCPVNNLYFREE.

The protein belongs to the FrhB family.

This is an uncharacterized protein from Methanocaldococcus jannaschii (strain ATCC 43067 / DSM 2661 / JAL-1 / JCM 10045 / NBRC 100440) (Methanococcus jannaschii).